The following is a 1163-amino-acid chain: DNA-directed RNA polymerase subunit beta 2 (1163 aa).

It belongs to the RNA polymerase beta chain family. As to quaternary structure, the RNAP catalytic core consists of 2 alpha, 1 beta, 1 beta' and 1 omega subunit. When a sigma factor is associated with the core the holoenzyme is formed, which can initiate transcription.

It carries out the reaction RNA(n) + a ribonucleoside 5'-triphosphate = RNA(n+1) + diphosphate. In terms of biological role, DNA-dependent RNA polymerase catalyzes the transcription of DNA into RNA using the four ribonucleoside triphosphates as substrates. This is DNA-directed RNA polymerase subunit beta 2 from Nocardia farcinica (strain IFM 10152).